Reading from the N-terminus, the 392-residue chain is Nicotinate phosphoribosyltransferase (392 aa).

At His214 the chain carries Phosphohistidine; by autocatalysis.

This sequence belongs to the NAPRTase family. Post-translationally, transiently phosphorylated on a His residue during the reaction cycle. Phosphorylation strongly increases the affinity for substrates and increases the rate of nicotinate D-ribonucleotide production. Dephosphorylation regenerates the low-affinity form of the enzyme, leading to product release.

The catalysed reaction is nicotinate + 5-phospho-alpha-D-ribose 1-diphosphate + ATP + H2O = nicotinate beta-D-ribonucleotide + ADP + phosphate + diphosphate. It functions in the pathway cofactor biosynthesis; NAD(+) biosynthesis; nicotinate D-ribonucleotide from nicotinate: step 1/1. In terms of biological role, catalyzes the synthesis of beta-nicotinate D-ribonucleotide from nicotinate and 5-phospho-D-ribose 1-phosphate at the expense of ATP. The sequence is that of Nicotinate phosphoribosyltransferase from Xanthomonas euvesicatoria pv. vesicatoria (strain 85-10) (Xanthomonas campestris pv. vesicatoria).